The chain runs to 232 residues: Large ribosomal subunit protein uL1 (232 aa).

The protein belongs to the universal ribosomal protein uL1 family. Part of the 50S ribosomal subunit.

In terms of biological role, binds directly to 23S rRNA. The L1 stalk is quite mobile in the ribosome, and is involved in E site tRNA release. Functionally, protein L1 is also a translational repressor protein, it controls the translation of the L11 operon by binding to its mRNA. The sequence is that of Large ribosomal subunit protein uL1 from Paraburkholderia xenovorans (strain LB400).